We begin with the raw amino-acid sequence, 82 residues long: ATP synthase subunit c, chloroplastic (82 aa).

Transmembrane regions (helical) follow at residues 4-24 and 57-77; these read IISA…AIGP and LAFM…LLFA.

It belongs to the ATPase C chain family. In terms of assembly, F-type ATPases have 2 components, F(1) - the catalytic core - and F(0) - the membrane proton channel. F(1) has five subunits: alpha(3), beta(3), gamma(1), delta(1), epsilon(1). F(0) has four main subunits: a(1), b(1), b'(1) and c(10-14). The alpha and beta chains form an alternating ring which encloses part of the gamma chain. F(1) is attached to F(0) by a central stalk formed by the gamma and epsilon chains, while a peripheral stalk is formed by the delta, b and b' chains.

It is found in the plastid. The protein resides in the chloroplast thylakoid membrane. Functionally, f(1)F(0) ATP synthase produces ATP from ADP in the presence of a proton or sodium gradient. F-type ATPases consist of two structural domains, F(1) containing the extramembraneous catalytic core and F(0) containing the membrane proton channel, linked together by a central stalk and a peripheral stalk. During catalysis, ATP synthesis in the catalytic domain of F(1) is coupled via a rotary mechanism of the central stalk subunits to proton translocation. Key component of the F(0) channel; it plays a direct role in translocation across the membrane. A homomeric c-ring of between 10-14 subunits forms the central stalk rotor element with the F(1) delta and epsilon subunits. The chain is ATP synthase subunit c, chloroplastic from Antithamnion sp. (Red alga).